Consider the following 338-residue polypeptide: D-erythrose-4-phosphate dehydrogenase (338 aa).

Residue 12–13 (RI) coordinates NAD(+). Residues 154–156 (SCT), R200, 213–214 (TK), and R236 contribute to the substrate site. Catalysis depends on C155, which acts as the Nucleophile. N318 contributes to the NAD(+) binding site.

Belongs to the glyceraldehyde-3-phosphate dehydrogenase family. Epd subfamily. As to quaternary structure, homotetramer.

The protein resides in the cytoplasm. The catalysed reaction is D-erythrose 4-phosphate + NAD(+) + H2O = 4-phospho-D-erythronate + NADH + 2 H(+). Its pathway is cofactor biosynthesis; pyridoxine 5'-phosphate biosynthesis; pyridoxine 5'-phosphate from D-erythrose 4-phosphate: step 1/5. Catalyzes the NAD-dependent conversion of D-erythrose 4-phosphate to 4-phosphoerythronate. The protein is D-erythrose-4-phosphate dehydrogenase of Yersinia enterocolitica serotype O:8 / biotype 1B (strain NCTC 13174 / 8081).